Reading from the N-terminus, the 559-residue chain is Cellulose biosynthesis protein BcsG (559 aa).

Transmembrane regions (helical) follow at residues 34–54 (LLWA…MAFL), 68–88 (HWIA…LPGP), 113–133 (FINW…LFLS), and 139–159 (TVFV…GPVF).

It localises to the cell membrane. Its function is as follows. Required for cellulose biosynthesis. This is Cellulose biosynthesis protein BcsG (bcsG) from Salmonella typhimurium (strain LT2 / SGSC1412 / ATCC 700720).